Here is a 377-residue protein sequence, read N- to C-terminus: Chaperone protein DnaJ (377 aa).

Residues 4–69 (DYYEALGVTR…QKRAAYDRFG (66 aa)) form the J domain. Residues 135 to 213 (GKTAQIRVPT…CHGQGRVTQE (79 aa)) form a CR-type zinc finger. C148, C151, C165, C168, C187, C190, C201, and C204 together coordinate Zn(2+). CXXCXGXG motif repeat units follow at residues 148 to 155 (CDECSGSG), 165 to 172 (CTMCSGSG), 187 to 194 (CPGCNGRG), and 201 to 208 (CEKCHGQG).

This sequence belongs to the DnaJ family. As to quaternary structure, homodimer. Requires Zn(2+) as cofactor.

The protein resides in the cytoplasm. Its function is as follows. Participates actively in the response to hyperosmotic and heat shock by preventing the aggregation of stress-denatured proteins and by disaggregating proteins, also in an autonomous, DnaK-independent fashion. Unfolded proteins bind initially to DnaJ; upon interaction with the DnaJ-bound protein, DnaK hydrolyzes its bound ATP, resulting in the formation of a stable complex. GrpE releases ADP from DnaK; ATP binding to DnaK triggers the release of the substrate protein, thus completing the reaction cycle. Several rounds of ATP-dependent interactions between DnaJ, DnaK and GrpE are required for fully efficient folding. Also involved, together with DnaK and GrpE, in the DNA replication of plasmids through activation of initiation proteins. This chain is Chaperone protein DnaJ, found in Brucella canis (strain ATCC 23365 / NCTC 10854 / RM-666).